A 507-amino-acid polypeptide reads, in one-letter code: Putative histone deacetylase 2 (507 aa).

A histone deacetylase region spans residues 29 to 342 (RNVAYYYHKD…WALETGVILG (314 aa)). Residue His-162 is part of the active site. The disordered stretch occupies residues 444–507 (EECFVEEDSK…RKDLNIPGIP (64 aa)). The span at 482–501 (SHSDVIEEAKYEDRDRRKDL) shows a compositional bias: basic and acidic residues.

It belongs to the histone deacetylase family. HD type 1 subfamily. As to quaternary structure, may be a component of a histone deacetylase complex containing saeg-2, saeg-1 and hda-2.

It localises to the nucleus. The catalysed reaction is N(6)-acetyl-L-lysyl-[histone] + H2O = L-lysyl-[histone] + acetate. Probably responsible for the deacetylation of lysine residues on the N-terminal part of the core histones (H2A, H2B, H3 and H4). Histone deacetylation gives a tag for epigenetic repression and plays an important role in transcriptional regulation, cell cycle progression and developmental events. Histone deacetylases act via the formation of large multiprotein complexes. As a likely component of a histone deacetylase complex, together with saeg-1 and hda-2, functions downstream of the cAMP-dependent kinase egl-4 to regulate the expression of genes required for egg-laying and forgaging. In Caenorhabditis elegans, this protein is Putative histone deacetylase 2 (hda-2).